The chain runs to 156 residues: Cytochrome c-type biogenesis protein CcmE 2 (156 aa).

The Cytoplasmic segment spans residues 1-8 (MNPQRRRR). A helical; Signal-anchor for type II membrane protein transmembrane segment spans residues 9 to 29 (LWLVLALVLAGGLATTLVAMA). Residues 30-156 (LQRNVAYLYT…AAAGQVGERQ (127 aa)) lie on the Periplasmic side of the membrane. H123 and Y127 together coordinate heme. The interval 136-156 (MGSAHRKHDVPAAAGQVGERQ) is disordered.

This sequence belongs to the CcmE/CycJ family.

It localises to the cell inner membrane. In terms of biological role, heme chaperone required for the biogenesis of c-type cytochromes. Transiently binds heme delivered by CcmC and transfers the heme to apo-cytochromes in a process facilitated by CcmF and CcmH. The protein is Cytochrome c-type biogenesis protein CcmE 2 of Xanthomonas axonopodis pv. citri (strain 306).